The primary structure comprises 86 residues: RNA-binding protein Hfq (86 aa).

The 60-residue stretch at 9–68 (DIFLNVLRRERIQVSIYLFNGIKLQGHIESFDQFVIVLKNTISQMVYKHAVSTIVPSKFV) folds into the Sm domain.

This sequence belongs to the Hfq family. As to quaternary structure, homohexamer.

In terms of biological role, RNA chaperone that binds small regulatory RNA (sRNAs) and mRNAs to facilitate mRNA translational regulation in response to envelope stress, environmental stress and changes in metabolite concentrations. Also binds with high specificity to tRNAs. This Baumannia cicadellinicola subsp. Homalodisca coagulata protein is RNA-binding protein Hfq.